The chain runs to 405 residues: Methylamine dehydrogenase heavy chain (405 aa).

Residues 1 to 36 (MTTFDHPSMIRQPKPTGLAGGLVLAALMLSSSLALA) form the signal peptide.

This sequence belongs to the aromatic amine dehydrogenase heavy chain family. Tetramer of two light and two heavy chains.

Its subcellular location is the periplasm. The catalysed reaction is 2 oxidized [amicyanin] + methylamine + H2O = 2 reduced [amicyanin] + formaldehyde + NH4(+) + 2 H(+). In terms of biological role, methylamine dehydrogenase carries out the oxidation of methylamine. Electrons are passed from methylamine dehydrogenase to amicyanin. This Methylophilus methylotrophus (Bacterium W3A1) protein is Methylamine dehydrogenase heavy chain (mauB).